A 184-amino-acid chain; its full sequence is Adenine phosphoribosyltransferase (184 aa).

It belongs to the purine/pyrimidine phosphoribosyltransferase family. As to quaternary structure, homodimer.

It localises to the cytoplasm. It catalyses the reaction AMP + diphosphate = 5-phospho-alpha-D-ribose 1-diphosphate + adenine. It participates in purine metabolism; AMP biosynthesis via salvage pathway; AMP from adenine: step 1/1. In terms of biological role, catalyzes a salvage reaction resulting in the formation of AMP, that is energically less costly than de novo synthesis. The sequence is that of Adenine phosphoribosyltransferase from Paracidovorax citrulli (strain AAC00-1) (Acidovorax citrulli).